Consider the following 392-residue polypeptide: Chaperone protein DnaJ (392 aa).

One can recognise a J domain in the interval 2–67; sequence DYYTILGVAK…QKRESYDRYG (66 aa). The segment at 149 to 227 adopts a CR-type zinc-finger fold; that stretch reads GVEKELLVSG…CRGQGRIKDK (79 aa). Zn(2+)-binding residues include C162, C165, C179, C182, C201, C204, C215, and C218. CXXCXGXG motif repeat units follow at residues 162–169, 179–186, 201–208, and 215–222; these read CDACSGSG, CDRCKGSG, CPDCSGEG, and CSECRGQG.

The protein belongs to the DnaJ family. As to quaternary structure, homodimer. Requires Zn(2+) as cofactor.

It is found in the cytoplasm. Its function is as follows. Participates actively in the response to hyperosmotic and heat shock by preventing the aggregation of stress-denatured proteins and by disaggregating proteins, also in an autonomous, DnaK-independent fashion. Unfolded proteins bind initially to DnaJ; upon interaction with the DnaJ-bound protein, DnaK hydrolyzes its bound ATP, resulting in the formation of a stable complex. GrpE releases ADP from DnaK; ATP binding to DnaK triggers the release of the substrate protein, thus completing the reaction cycle. Several rounds of ATP-dependent interactions between DnaJ, DnaK and GrpE are required for fully efficient folding. Also involved, together with DnaK and GrpE, in the DNA replication of plasmids through activation of initiation proteins. The protein is Chaperone protein DnaJ of Chlamydia muridarum (strain MoPn / Nigg).